We begin with the raw amino-acid sequence, 1052 residues long: CCAAT/enhancer-binding protein zeta (1052 aa).

3 disordered regions span residues 1–40, 122–158, and 621–677; these read MSAD…KNGF, VENK…VSKA, and SQLD…AEKP. The span at 23 to 34 shows a compositional bias: acidic residues; the sequence is EDPDEEDEEDGD. Residues 122-150 are compositionally biased toward basic and acidic residues; it reads VENKKQKATEGKKTSEKKVKNKTVAEQRP. The span at 627 to 643 shows a compositional bias: acidic residues; it reads PESDEENFVDVGDDSDD. 2 positions are modified to phosphoserine: serine 629 and serine 641. The segment covering 644-677 has biased composition (basic and acidic residues); it reads EKFTDADKGTATDAVKEVESKETEPESSAEAEKP. Serine 837 is subject to Phosphoserine. The interval 876–969 is disordered; the sequence is KGAKADLEDS…QGQKKKKKSF (94 aa). A compositionally biased stretch (acidic residues) spans 883–932; that stretch reads EDSESSDGELGDLDDDEVSLGSMNDEDFEIDEDGGTFMDVSDDESEDAPE. 3 positions are modified to phosphoserine: serine 958, serine 972, and serine 977. A disordered region spans residues 1032-1052; the sequence is KKKKNFRKKMKAPQKPKRQRK.

Belongs to the CBF/MAK21 family. As to expression, ubiquitous.

Its subcellular location is the nucleus. In terms of biological role, stimulates transcription from the HSP70 promoter. The sequence is that of CCAAT/enhancer-binding protein zeta (Cebpz) from Mus musculus (Mouse).